The primary structure comprises 276 residues: Probable ribose-5-phosphate isomerase 3, chloroplastic (276 aa).

The N-terminal 39 residues, 1–39 (MASLSFVSSSHLTLRTPSIALRSTGSSPRTSVSFSVKAQ), are a transit peptide targeting the chloroplast. Position 40 is an N-acetylserine (serine 40). A Phosphoserine modification is found at serine 108.

Belongs to the ribose 5-phosphate isomerase family. In terms of processing, phosphorylated by SRK2C.

It is found in the plastid. The protein resides in the chloroplast. The enzyme catalyses aldehydo-D-ribose 5-phosphate = D-ribulose 5-phosphate. Its pathway is carbohydrate degradation; pentose phosphate pathway; D-ribose 5-phosphate from D-ribulose 5-phosphate (non-oxidative stage): step 1/1. Its function is as follows. Catalyzes the reversible conversion of ribose-5-phosphate to ribulose 5-phosphate. This is Probable ribose-5-phosphate isomerase 3, chloroplastic (RPI3) from Arabidopsis thaliana (Mouse-ear cress).